Reading from the N-terminus, the 154-residue chain is Aspartate carbamoyltransferase regulatory chain (154 aa).

4 residues coordinate Zn(2+): Cys111, Cys116, Cys139, and Cys142.

It belongs to the PyrI family. Contains catalytic and regulatory chains. Zn(2+) is required as a cofactor.

Functionally, involved in allosteric regulation of aspartate carbamoyltransferase. The polypeptide is Aspartate carbamoyltransferase regulatory chain (Parabacteroides distasonis (strain ATCC 8503 / DSM 20701 / CIP 104284 / JCM 5825 / NCTC 11152)).